We begin with the raw amino-acid sequence, 134 residues long: UPF0412 protein YaaI (134 aa).

The signal sequence occupies residues 1–23; the sequence is MRSVLTISVGLLFGLALSSVAHA.

It belongs to the UPF0412 family.

The protein is UPF0412 protein YaaI of Salmonella paratyphi A (strain ATCC 9150 / SARB42).